We begin with the raw amino-acid sequence, 530 residues long: Asc-type amino acid transporter 1 (530 aa).

The segment at methionine 1–alanine 36 is disordered. Over residues glycine 21–glycine 33 the composition is skewed to pro residues. 10 helical membrane passes run isoleucine 46–isoleucine 66, valine 78–cysteine 98, isoleucine 119–threonine 139, isoleucine 192–phenylalanine 212, alanine 274–phenylalanine 294, leucine 316–isoleucine 336, cysteine 368–glycine 388, isoleucine 394–valine 414, leucine 430–serine 450, and valine 454–phenylalanine 474. A disordered region spans residues glutamate 508–glutamine 530.

This sequence belongs to the amino acid-polyamine-organocation (APC) superfamily. As to quaternary structure, disulfide-linked heterodimer with the amino acid transport protein SLC3A2/4F2hc.

The protein localises to the cell membrane. It carries out the reaction L-alanine(in) + glycine(out) = L-alanine(out) + glycine(in). The enzyme catalyses L-serine(out) + L-alanine(in) = L-serine(in) + L-alanine(out). The catalysed reaction is L-threonine(out) + L-alanine(in) = L-threonine(in) + L-alanine(out). It catalyses the reaction L-cysteine(out) + L-alanine(in) = L-cysteine(in) + L-alanine(out). It carries out the reaction 2-aminoisobutanoate(out) + L-alanine(in) = 2-aminoisobutanoate(in) + L-alanine(out). The enzyme catalyses D-serine(out) + L-alanine(in) = D-serine(in) + L-alanine(out). The catalysed reaction is D-alanine(out) + L-alanine(in) = D-alanine(in) + L-alanine(out). It catalyses the reaction L-valine(out) + L-alanine(in) = L-valine(in) + L-alanine(out). It carries out the reaction L-methionine(out) + L-alanine(in) = L-methionine(in) + L-alanine(out). The enzyme catalyses beta-alanine(out) + L-alanine(in) = beta-alanine(in) + L-alanine(out). The catalysed reaction is D-cysteine(out) + L-alanine(in) = D-cysteine(in) + L-alanine(out). It catalyses the reaction D-threonine(out) + L-alanine(in) = D-threonine(in) + L-alanine(out). It carries out the reaction D-isoleucine(out) + D-serine(in) = D-isoleucine(in) + D-serine(out). The enzyme catalyses D-serine(in) = D-serine(out). Functionally, associates with SLC3A2/4F2hc to form a functional heterodimeric complex that translocates small neutral L- and D-amino acids across the plasma membrane. Preferentially mediates exchange transport, but can also operate via facilitated diffusion. Acts as a major transporter for glycine, L- and D-serine in the central nervous system. At the spinal cord and brainstem regulates glycine metabolism and glycinergic inhibitory neurotransmission by providing for glycine de novo synthesis from L-serine and glycine recycling from astrocytes to glycinergic motor neurons. At Schaffer collateral-CA1 synapses mediates D-serine and glycine release that modulates post-synaptic activation of NMDA receptors and excitatory glutamatergic transmission. May regulate D-serine release from mesenchymal progenitors located in developing subcutaneous adipose tissue, favoring white adipocyte over thermogenic beige adipocyte lineage commitment. In Rattus norvegicus (Rat), this protein is Asc-type amino acid transporter 1 (Slc7a10).